Reading from the N-terminus, the 1113-residue chain is MFGVSRGAFPSATTQPFGSTGSTFGGQQQQQQPVANTSAFGLSQQTNTTQAPAFGNFGNQTSNSPFGMSGSTTANGTPFGQSQLTNNNASGSIFGGMGNNTALSAGSASVVPNSTAGTSIKPFTTFEEKDPTTGVINVFQSITCMPEYRNFSFEELRFQDYQAGRKFGTSQNGTGTTFNNPQGTTNTGFGIMGNNNSTTSATTGGLFGQKPATGMFGTGTGSGGGFGSGATNSTGLFGSSTNLSGNSAFGANKPATSGGLFGNTTNNPTNGTNNTGLFGQQNSNTNGGLFGQQQNSFGANNVSNGGAFGQVNRGAFPQQQTQQGSGGIFGQSNANANGGAFGQQQGTGALFGAKPASGGLFGQSAGSKAFGMNTNPTGTTGGLFGQTNQQQSGGGLFGQQQNSNAGGLFGQNNQSQNQSGLFGQQNSSNAFGQPQQQGGLFGSKPAGGLFGQQQGASTFASGNAQNNSIFGQNNQQQQSTGGLFGQQNNQSQSQPGGLFGQTNQNNNQPFGQNGLQQPQQNNSLFGAKPTGFGNTSLFSNSTTNQSNGISGNNLQQQSGGLFQNKQQPASGGLFGSKPSNTVGGGLFGNNQVANQNNPASTSGGLFGSKPATGSLFGGTNSTAPNASSGGIFGSNNASNTAATTNSTGLFGNKPVGAGASTSAGGLFGNNNNSSLNNSNGSTGLFGSNNTSQSTNAGGLFQNNTSTNTSGGGLFSQPSQSMAQSQNALQQQQQQQRLQIQNNNPYGTNELFSKATVTNTVSYPIQPSATKIKADERKKASLTNAYKMIPKTLFTAKLKTNNSVMDKAQIKVDPKLSISIDKKNNQIAISNQQEENLDESILKASELLFNPDKRSFKNLINNRKMLIASEEKNNGSQNNDMNFKSKSEEQETILGKPKMDEKETANGGERMVLSSKNDGEDSATKHHSRNMDEENKENVADLQKQEYSEDDKKAVFADVAEKDASFINENYYISPSLDTLSSYSLLQLRKVPHLVVGHKSYGKIEFLEPVDLAGIPLTSLGGVIITFEPKTCIIYANLPNRPKRGEGINVRARITCFNCYPVDKSTRKPIKDPNHQLVKRHIERLKKNPNSKFESYDADSGTYVFIVNHAAEQT.

The interval methionine 1 to alanine 35 is disordered. 4 FG repeats span residues phenylalanine 2–glycine 3, phenylalanine 17–glycine 18, phenylalanine 24–glycine 25, and phenylalanine 40–glycine 41. Positions threonine 13 to proline 33 are enriched in low complexity. The tract at residues threonine 49–glycine 91 is disordered. One copy of the GLFG 1; approximate repeat lies at glycine 55 to glycine 58. FG repeat units follow at residues phenylalanine 66–glycine 67, phenylalanine 79–glycine 80, and phenylalanine 94–glycine 95. An interaction with AFG2 region spans residues serine 92–asparagine 172. The GLE2 binding sequence (GLEBS) stretch occupies residues valine 110–lysine 166. The interaction with MEX67, not KAP95 stretch occupies residues aspartate 160–glycine 362. FG repeat units lie at residues phenylalanine 167–glycine 168 and phenylalanine 189–glycine 190. Residues glycine 205 to glycine 208 form a GLFG 2 repeat. A GLFG 3; approximate repeat occupies glycine 214–glycine 217. The GLFG 4; approximate repeat unit spans residues glycine 224–glycine 227. A GLFG 5 repeat occupies glycine 235–glycine 238. The FG 10 repeat unit spans residues phenylalanine 249–glycine 250. GLFG repeat units lie at residues glycine 259–glycine 262, glycine 276–glycine 279, and glycine 288–glycine 291. Over residues threonine 265–glycine 279 the composition is skewed to low complexity. The tract at residues threonine 265–phenylalanine 341 is disordered. Over residues glutamine 280–asparagine 304 the composition is skewed to polar residues. The stretch at phenylalanine 297–glycine 298 is one FG 11 repeat. The GLFG 9; approximate repeat unit spans residues glycine 306–glycine 309. The stretch at glycine 327–glycine 330 is one GLFG 10; approximate repeat. Over residues glycine 330–phenylalanine 341 the composition is skewed to low complexity. One copy of the GLFG 11; approximate repeat lies at glycine 339–glycine 342. One copy of the FG 12 repeat lies at phenylalanine 351 to glycine 352. Residues glycine 359 to glycine 362 form a GLFG 12 repeat. A sufficient for interaction with MEX67 and KAP95 region spans residues glycine 362–threonine 535. One copy of the FG 13 repeat lies at phenylalanine 370–glycine 371. The tract at residues glycine 371–phenylalanine 606 is disordered. 4 GLFG repeats span residues glycine 382–glycine 385, glycine 395–glycine 398, glycine 407–glycine 410, and glycine 420–glycine 423. Residues glycine 410–glycine 438 show a composition bias toward low complexity. One copy of the FG 14 repeat lies at phenylalanine 431–glycine 432. GLFG repeat units follow at residues glycine 439–glycine 442 and glycine 448–glycine 451. Polar residues predominate over residues glycine 451–alanine 464. Low complexity-rich tracts occupy residues glutamine 465–glutamine 478 and glycine 485–asparagine 522. The FG 15 repeat unit spans residues phenylalanine 470–glycine 471. GLFG repeat units follow at residues glycine 482–glycine 485 and glycine 497–glycine 500. FG repeat units follow at residues phenylalanine 510–glycine 511, phenylalanine 525–glycine 526, and phenylalanine 532–glycine 533. The span at phenylalanine 532–alanine 569 shows a compositional bias: polar residues. The segment at serine 536 to glutamine 732 is interaction with KAP95, not MEX67. 3 GLFG repeats span residues glycine 572–glycine 575, glycine 585–glycine 588, and glycine 604–glycine 607. Polar residues predominate over residues glycine 588–glycine 603. Residues phenylalanine 616–glycine 617 form an FG 19 repeat. The stretch at glycine 630–glycine 633 is one GLFG 24; approximate repeat. 3 GLFG repeats span residues glycine 648–glycine 651, glycine 665–glycine 668, and glycine 683–glycine 686. Over residues serine 678–serine 691 the composition is skewed to low complexity. Disordered regions lie at residues serine 678 to arginine 736 and serine 868 to alanine 939. Polar residues predominate over residues glutamine 692 to threonine 708. The span at glutamine 719–arginine 736 shows a compositional bias: low complexity. The residue at position 886 (serine 886) is a Phosphoserine. Basic and acidic residues predominate over residues asparagine 916 to alanine 939. In terms of domain architecture, Peptidase S59 spans asparagine 967–alanine 1109. The segment at asparagine 967–threonine 1113 is interaction with NUP82 NPC subcomplex. Residues asparagine 969 to histidine 1108 are nucleoporin RNA-binding motif (NRM).

It belongs to the nucleoporin GLFG family. Component of the nuclear pore complex (NPC). NPC constitutes the exclusive means of nucleocytoplasmic transport. NPCs allow the passive diffusion of ions and small molecules and the active, nuclear transport receptor-mediated bidirectional transport of macromolecules such as proteins, RNAs, ribonucleoparticles (RNPs), and ribosomal subunits across the nuclear envelope. Due to its 8-fold rotational symmetry, all subunits are present with 8 copies or multiples thereof. NUP116 interacts with the NUP82 subcomplex and GLE2. Through its FG repeats it interacts with numerous karyopherins including KAP95, PSE1 (GSP1-GDP dependent), MEX67, and to homomeric RNA. Interacts with CEX1. Interacts (via N-terminus) with AFG2 (via N-terminus).

It localises to the nucleus. The protein resides in the nuclear pore complex. Its subcellular location is the nucleus membrane. Functionally, functions as a component of the nuclear pore complex (NPC). NPC components, collectively referred to as nucleoporins (NUPs), can play the role of both NPC structural components and of docking or interaction partners for transiently associated nuclear transport factors. Active directional transport is assured by both, a Phe-Gly (FG) repeat affinity gradient for these transport factors across the NPC and a transport cofactor concentration gradient across the nuclear envelope (GSP1 and GSP2 GTPases associated predominantly with GTP in the nucleus, with GDP in the cytoplasm). Plays an important role in several nuclear export and import pathways including poly(A)+ RNA, tRNA, pre-ribosome, and protein transport. By binding ATPase AFG2, promotes AFG2-mediated release of shuttling protein RLP24 from pre-60S ribosomal particles. The chain is Nucleoporin NUP116/NSP116 (NUP116) from Saccharomyces cerevisiae (strain ATCC 204508 / S288c) (Baker's yeast).